The following is a 263-amino-acid chain: MTDILQEIIAHKREELVERQTRLGLAELQAAVALTAPPRNFVGAVRARMAQGQPAVIAEIKKASPSAGVIREDFNPVTIAQDYAAHGAACLSVLTDEHYFQGADLYLAAAREACPLPVLRKDFCIDPYQVWEARAIGADAILLIVAALSDAELQSLEATAQSLDLAVLVEVHDAAELQRALKLRTPLIGINNRDLRRFVTEIETTLKLLPEIPRERIVVTESGIRSREEVATLRAAGVGAFLVGEAFMRTAQPGDALQHLFFD.

Belongs to the TrpC family.

It carries out the reaction 1-(2-carboxyphenylamino)-1-deoxy-D-ribulose 5-phosphate + H(+) = (1S,2R)-1-C-(indol-3-yl)glycerol 3-phosphate + CO2 + H2O. It functions in the pathway amino-acid biosynthesis; L-tryptophan biosynthesis; L-tryptophan from chorismate: step 4/5. The sequence is that of Indole-3-glycerol phosphate synthase from Acidithiobacillus ferrooxidans (strain ATCC 23270 / DSM 14882 / CIP 104768 / NCIMB 8455) (Ferrobacillus ferrooxidans (strain ATCC 23270)).